Here is a 398-residue protein sequence, read N- to C-terminus: Glycerol-3-phosphate dehydrogenase [NAD(+)] 1 (398 aa).

NAD(+)-binding positions include 50-55 (GSGNWG), Phe-138, Lys-161, and Ala-194. Residue Lys-161 coordinates substrate. The active-site Proton acceptor is the Lys-253. The NAD(+) site is built by Arg-318 and Gln-350. 318-319 (RN) provides a ligand contact to substrate.

It belongs to the NAD-dependent glycerol-3-phosphate dehydrogenase family.

The protein resides in the cytoplasm. The catalysed reaction is sn-glycerol 3-phosphate + NAD(+) = dihydroxyacetone phosphate + NADH + H(+). The sequence is that of Glycerol-3-phosphate dehydrogenase [NAD(+)] 1 (GPD1) from Yarrowia lipolytica (strain CLIB 122 / E 150) (Yeast).